The sequence spans 2162 residues: Calpain-type cysteine protease ADL1 (2162 aa).

Positions 1 to 33 are cleaved as a signal peptide; sequence MEEEEHRGVVLVCSICGFLFAVLGPLSFWILWA. At 34–70 the chain is on the extracellular side; the sequence is VNWRPWRLYSWIYARKWPAYVQGPQLSTLCSFFTLFA. The chain crosses the membrane as a helical span at residues 71 to 91; that stretch reads WLVVVSPITVLLVWGGILIAL. The Cytoplasmic segment spans residues 92–95; that stretch reads LERN. A helical membrane pass occupies residues 96 to 116; that stretch reads IIGLAVIMVGVALLLSFYSIM. Over 117 to 127 the chain is Extracellular; that stretch reads LWWRTQWQSSK. A helical membrane pass occupies residues 128–148; it reads AVAYLLLLAVGLLCAYEFCAV. Over 149–164 the chain is Cytoplasmic; sequence YVTTGASASELNSPSG. A helical transmembrane segment spans residues 165 to 185; sequence FFFGVSAISLAINMLFISKIL. Topologically, residues 186–236 are extracellular; the sequence is FNGSGFDVDEYVRRLYKFAYSDCVEVAPVSCSPDPPDPSELYMTKSSRVLH. The chain crosses the membrane as a helical span at residues 237 to 257; that stretch reads LGLLYLCSLMVLVVYSILYGL. The Cytoplasmic portion of the chain corresponds to 258–264; that stretch reads TSKEARW. The helical transmembrane segment at 265-285 threads the bilayer; the sequence is LGALTSVAVVILDWNLGLCSF. Residues 286–294 lie on the Extracellular side of the membrane; sequence RFELLKSRM. Residues 295–315 traverse the membrane as a helical segment; it reads IALFVAGTSRVFLICFGVHYW. At 316–320 the chain is on the cytoplasmic side; it reads YLGHC. The chain crosses the membrane as a helical span at residues 321-341; sequence ISYAFVASVLLAAAVSCWLSI. Residues 342–626 lie on the Extracellular side of the membrane; the sequence is SNPSVARIDA…LMFHQVAGSP (285 aa). Residues 366–403 form a disordered region; the sequence is KGQTSSSNSSDGCGSSVKRSSGSVEAGPHGNATDSMYR. Low complexity predominate over residues 370–381; it reads SSSNSSDGCGSS. A helical membrane pass occupies residues 627–647; it reads IRAFVVFTLIFIIETVTVAVH. The Cytoplasmic segment spans residues 648–663; it reads RPKPIKVINATHEQFE. A helical transmembrane segment spans residues 664–684; sequence FGFSILLLSPVVCSIMAFIWS. The Extracellular segment spans residues 685-697; that stretch reads LCAEEMTMTSKPR. The chain crosses the membrane as a helical span at residues 698–718; it reads KYGFIAWLLSTCVGLLLSFLS. The Cytoplasmic segment spans residues 719–722; that stretch reads KSSV. A helical transmembrane segment spans residues 723–743; that stretch reads ILGLSLTVPLMVACLSFAIPI. Topologically, residues 744-773 are extracellular; that stretch reads WMRNGYRFWIPGGELDSRENIRQAPGKKER. Residues 774–794 form a helical membrane-spanning segment; it reads ALFAISITVFTASVIGLGAIV. The Cytoplasmic portion of the chain corresponds to 795–825; it reads SAKPLDALGYKGWDADKKSFYSPYATSMYLG. Residues 826–846 form a helical membrane-spanning segment; it reads WALSSTIAVLATGVIPIVAWF. The Extracellular segment spans residues 847–856; the sequence is ATYRFSPSSA. The helical transmembrane segment at 857–877 threads the bilayer; the sequence is ICVGLFATVLVSFCGVSYWGV. At 878 to 890 the chain is on the cytoplasmic side; it reads VNSRQDGVPLKAD. A helical transmembrane segment spans residues 891–911; the sequence is FLAALLPLLCIPAVFSLFTGM. At 912–924 the chain is on the extracellular side; it reads YKWKDDDWKISRG. The helical transmembrane segment at 925–945 threads the bilayer; sequence VYLFVGMGVLLLLGAISAVIV. At 946–949 the chain is on the cytoplasmic side; it reads TIRP. A helical transmembrane segment spans residues 950 to 970; that stretch reads WTVGVACLLVILFLVFAIGVI. Residues 971-984 are Extracellular-facing; sequence HYWTSNNFYLTRTQ. Residues 985 to 1005 traverse the membrane as a helical segment; the sequence is MLLVCSLAFLLALAAFLMGLF. Over 1006–1019 the chain is Cytoplasmic; the sequence is QEKPFVGASIGYFS. A helical membrane pass occupies residues 1020-1040; it reads FLFLLTGRALTVLLSPPIVVY. Over 1041 to 1063 the chain is Extracellular; the sequence is SPRVLPVYVYDAHADSAKNVSYA. Residues 1064 to 1084 form a helical membrane-spanning segment; sequence FLILYGIALATEVWGVIASLI. Residues 1085–2162 lie on the Cytoplasmic side of the membrane; the sequence is LNPPFIGAAI…TKAPIKLEAV (1078 aa). Phosphoserine occurs at positions 1372 and 1377. The 194-residue stretch at 1418–1611 folds into the Calpain catalytic 1 domain; that stretch reads TGRHCGEIDL…ICSAEYGLFD (194 aa). The residue at position 1668 (S1668) is a Phosphoserine. Residues 1706 to 2008 form the Calpain catalytic 2 domain; that stretch reads NFTDQEFPPD…FRSIYVCRVY (303 aa). Active-site residues include C1772, H1930, and N1950.

This sequence belongs to the peptidase C2 family. Autocatalytic proteolytic cleavage leading to the production of mainly cytoplasmic localized subproducts of about 85 and 120 kDa. In terms of tissue distribution, ubiquitously expressed with higher levels in embryos, vasculatures, leaf primordia, leaf margins, and shoot apical meristem (SAM).

The protein resides in the endoplasmic reticulum membrane. It is found in the cytoplasm. The protein localises to the cell membrane. Its subcellular location is the endosome membrane. In terms of biological role, essential protease involved in epiderm development. Required for aleurone cell development in the endosperm probably by maintaining and restricting the aleurone and embryonic epidermal L1 cell-layer fates as well as meristems organization. Involved in the maintenance of adaxial/abaxial axis information in developing leaves, probably by regulating cell proliferation and expansion. Does not need calcium ions to be active. In Oryza sativa subsp. japonica (Rice), this protein is Calpain-type cysteine protease ADL1 (ADL1).